The sequence spans 216 residues: Ras-related protein YPTC6 (216 aa).

A GTP-binding site is contributed by Gly-19 to Ser-26. The Effector region motif lies at Ser-41–Phe-49. GTP is bound by residues Asp-67–Gln-71 and Asn-125–Asp-128. 2 S-geranylgeranyl cysteine lipidation sites follow: Cys-214 and Cys-215.

This sequence belongs to the small GTPase superfamily. Rab family.

The protein localises to the cell membrane. This Chlamydomonas reinhardtii (Chlamydomonas smithii) protein is Ras-related protein YPTC6 (YPTC6).